The following is a 1052-amino-acid chain: Suppressor of RPS4-RLD 1 (1052 aa).

Alanine 2 is subject to N-acetylalanine. 2 TPR repeats span residues 39 to 72 (ILDICNRAFCYNQLELHKHVIKDCDKALLLEPFA) and 74 to 106 (QAFILKGRALLALGRKQEAVLVLEQGYKSALQQ). A coiled-coil region spans residues 107 to 136 (TADVKQLLELEELLKDARREIDGILKSHAT). A disordered region spans residues 131-181 (LKSHATESPQETPAYHSEKSDEKSDKLDNHESGASSNGNSHESSSELGEQS). Positions 146-161 (HSEKSDEKSDKLDNHE) are enriched in basic and acidic residues. Residues 162 to 181 (SGASSNGNSHESSSELGEQS) are compositionally biased toward low complexity. TPR repeat units lie at residues 297–330 (VDFRLSRGIAQVNEGNYTKAISIFDKVLKEEPTY), 331–364 (PEALIGRGTAYAFQRELESAIADFTKAIQSNPAA), 365–398 (SEAWKRRGQARAALGEYVEAVEDLTKALVFEPNS), 400–432 (DVLHERGIVNFKSKDFTAAVKDLSICLKQEKDN), 433–466 (KSAYTYLGLAFASLGEYKKAEEAHLKSIQLDSNY), 468–500 (EAWLHLAQFYQELADHCKALECIEQVLQVDNRV), 502–534 (KAYHLRGLVFHGLGEHRKAIQELSIGLSIENTI), 535–567 (ECLYLRGSCYHAVGEYRDAVKDYDATVDVELDA), and 569–591 (EKFVLQCLAFYQKELALYTASKV). The tract at residues 704-739 (STKGTTKNGKKNRRRERTNILSQNRGGAGCSSSSFS) is disordered. A helical membrane pass occupies residues 966–986 (GTAVTGFVVLLGLLLAANMEF).

Multimer. Interacts with EDS1. Interacts with SNC1 and RPS4. Interacts (via TPR domain) with SGT1 (via TPR domain). Interacts with the TCP transcription factors TCP8, TCP14, TCP15, TCP20, TCP22 and TCP23. Ubiquitous. Not detected in very young flowers and older siliques.

The protein localises to the nucleus. It localises to the cytoplasm. It is found in the perinuclear region. The protein resides in the membrane. Its subcellular location is the microsome. Functionally, negative regulator of effector-triggered immunity associated with the EDS1 resistance pathway. May localize its interactors to a microsomal membrane. May therefore negatively regulate RPS4 and SNC1 translocation to the nucleus. Contributes to the regulation of RPS2 and RPS4 protein levels and negatively regulates SNC1 stability. The protein is Suppressor of RPS4-RLD 1 of Arabidopsis thaliana (Mouse-ear cress).